The primary structure comprises 708 residues: Polyribonucleotide nucleotidyltransferase (708 aa).

2 residues coordinate Mg(2+): Asp486 and Asp492. One can recognise a KH domain in the interval 553-612 (PRIIKFKINPEKIRDVIGKGGAVIRALTEETGTTIDISDDGSVTIACVSSEGGEQARKRI). The S1 motif domain occupies 622–690 (GRIYEGTVLK…EKGRLRLSMK (69 aa)).

This sequence belongs to the polyribonucleotide nucleotidyltransferase family. The cofactor is Mg(2+).

Its subcellular location is the cytoplasm. It catalyses the reaction RNA(n+1) + phosphate = RNA(n) + a ribonucleoside 5'-diphosphate. Its function is as follows. Involved in mRNA degradation. Catalyzes the phosphorolysis of single-stranded polyribonucleotides processively in the 3'- to 5'-direction. The chain is Polyribonucleotide nucleotidyltransferase from Nitrosomonas europaea (strain ATCC 19718 / CIP 103999 / KCTC 2705 / NBRC 14298).